The sequence spans 289 residues: ATP synthase gamma chain (289 aa).

This sequence belongs to the ATPase gamma chain family. In terms of assembly, F-type ATPases have 2 components, CF(1) - the catalytic core - and CF(0) - the membrane proton channel. CF(1) has five subunits: alpha(3), beta(3), gamma(1), delta(1), epsilon(1). CF(0) has three main subunits: a, b and c.

It is found in the cell inner membrane. Produces ATP from ADP in the presence of a proton gradient across the membrane. The gamma chain is believed to be important in regulating ATPase activity and the flow of protons through the CF(0) complex. In Phocaeicola vulgatus (strain ATCC 8482 / DSM 1447 / JCM 5826 / CCUG 4940 / NBRC 14291 / NCTC 11154) (Bacteroides vulgatus), this protein is ATP synthase gamma chain.